The chain runs to 572 residues: Proline--tRNA ligase (572 aa).

Belongs to the class-II aminoacyl-tRNA synthetase family. ProS type 1 subfamily. As to quaternary structure, homodimer.

The protein resides in the cytoplasm. It carries out the reaction tRNA(Pro) + L-proline + ATP = L-prolyl-tRNA(Pro) + AMP + diphosphate. Its function is as follows. Catalyzes the attachment of proline to tRNA(Pro) in a two-step reaction: proline is first activated by ATP to form Pro-AMP and then transferred to the acceptor end of tRNA(Pro). As ProRS can inadvertently accommodate and process non-cognate amino acids such as alanine and cysteine, to avoid such errors it has two additional distinct editing activities against alanine. One activity is designated as 'pretransfer' editing and involves the tRNA(Pro)-independent hydrolysis of activated Ala-AMP. The other activity is designated 'posttransfer' editing and involves deacylation of mischarged Ala-tRNA(Pro). The misacylated Cys-tRNA(Pro) is not edited by ProRS. The polypeptide is Proline--tRNA ligase (Psychrobacter arcticus (strain DSM 17307 / VKM B-2377 / 273-4)).